A 127-amino-acid chain; its full sequence is UPF0102 protein Paes_0016 (127 aa).

It belongs to the UPF0102 family.

This Prosthecochloris aestuarii (strain DSM 271 / SK 413) protein is UPF0102 protein Paes_0016.